We begin with the raw amino-acid sequence, 216 residues long: Probable succinyl-CoA:3-ketoacid coenzyme A transferase subunit B (216 aa).

Residue E47 is part of the active site.

Belongs to the 3-oxoacid CoA-transferase subunit B family. In terms of assembly, heterodimer of a subunit A and a subunit B.

It catalyses the reaction a 3-oxo acid + succinyl-CoA = a 3-oxoacyl-CoA + succinate. This Bacillus subtilis (strain 168) protein is Probable succinyl-CoA:3-ketoacid coenzyme A transferase subunit B (scoB).